A 307-amino-acid polypeptide reads, in one-letter code: 4-hydroxythreonine-4-phosphate dehydrogenase (307 aa).

Residues H126 and T127 each contribute to the substrate site. Residues H156, H195, and H251 each coordinate a divalent metal cation. 3 residues coordinate substrate: K259, N268, and R277.

The protein belongs to the PdxA family. Homodimer. Zn(2+) serves as cofactor. The cofactor is Mg(2+). It depends on Co(2+) as a cofactor.

It is found in the cytoplasm. The catalysed reaction is 4-(phosphooxy)-L-threonine + NAD(+) = 3-amino-2-oxopropyl phosphate + CO2 + NADH. Its pathway is cofactor biosynthesis; pyridoxine 5'-phosphate biosynthesis; pyridoxine 5'-phosphate from D-erythrose 4-phosphate: step 4/5. Its function is as follows. Catalyzes the NAD(P)-dependent oxidation of 4-(phosphooxy)-L-threonine (HTP) into 2-amino-3-oxo-4-(phosphooxy)butyric acid which spontaneously decarboxylates to form 3-amino-2-oxopropyl phosphate (AHAP). This chain is 4-hydroxythreonine-4-phosphate dehydrogenase, found in Helicobacter pylori (strain P12).